A 412-amino-acid chain; its full sequence is MIIVNKEDCIRCGACQGTCPTAAIEVTPEDVIYCDICGGEPKCVDICPTGALKLEDLVVDEAGNTQGRIVFNPDKCNECGDCVEVCPPQILKLDEGKVKKVPLQGFCVMCQKCVDICPVGVIGVEGIKEPAKVELEIEGPIFIADCVGCGMCVPECPVDAITLDKVGGVIEIDEDTCIKCGVCAQTCPWNAVYISGRKPEKRAKEIKKFELDEDACIGCNTCVEACPGDFIVPRTSNLTVELPAICTACGLCEQLCPVDAIDLEVELGPAKPASEEGLVWDEEKCDFIGACANICPNDAIRVVTKEGMKVPDNEKVDEEPSFAMCTRCGACTVACPKGALSLVDMDKVVDGEVVKRKRVQYNPALCDQCGDCIEACPYDMLKLTDEKVPLKGFCILCDQCIPACPKGALSLK.

4Fe-4S ferredoxin-type domains are found at residues 2–29 (IIVN…VTPE), 30–57 (DVIY…LEDL), 67–96 (GRIV…LDEG), 97–127 (KVKK…VEGI), 138–166 (EGPI…LDKV), 168–197 (GVIE…ISGR), 207–236 (KKFE…PRTS), 238–266 (LTVE…LEVE), 276–305 (EGLV…VVTK), 314–345 (EKVD…LVDM), 357–386 (KRVQ…LTDE), and 385–412 (DEKV…LSLK). The [4Fe-4S] cluster site is built by Cys-9, Cys-12, Cys-15, and Cys-19. The [4Fe-4S] cluster site is built by Cys-76, Cys-79, Cys-82, Cys-86, Cys-107, Cys-110, Cys-113, Cys-117, Cys-146, Cys-149, Cys-152, Cys-156, Cys-177, Cys-180, Cys-183, Cys-187, Cys-216, Cys-219, Cys-222, Cys-226, Cys-246, Cys-249, Cys-252, and Cys-256. Residues Cys-325, Cys-328, Cys-331, Cys-335, Cys-366, Cys-369, Cys-372, Cys-376, Cys-394, Cys-397, Cys-400, and Cys-404 each coordinate [4Fe-4S] cluster.

[4Fe-4S] cluster serves as cofactor.

The polypeptide is Polyferredoxin protein MvhB (mvhB) (Methanothermobacter thermautotrophicus (strain ATCC 29096 / DSM 1053 / JCM 10044 / NBRC 100330 / Delta H) (Methanobacterium thermoautotrophicum)).